Here is a 1270-residue protein sequence, read N- to C-terminus: DNA-directed RNA polymerase subunit beta (1270 aa).

Belongs to the RNA polymerase beta chain family. In terms of assembly, the RNAP catalytic core consists of 2 alpha, 1 beta, 1 beta' and 1 omega subunit. When a sigma factor is associated with the core the holoenzyme is formed, which can initiate transcription.

The catalysed reaction is RNA(n) + a ribonucleoside 5'-triphosphate = RNA(n+1) + diphosphate. DNA-dependent RNA polymerase catalyzes the transcription of DNA into RNA using the four ribonucleoside triphosphates as substrates. In Christiangramia forsetii (strain DSM 17595 / CGMCC 1.15422 / KT0803) (Gramella forsetii), this protein is DNA-directed RNA polymerase subunit beta.